We begin with the raw amino-acid sequence, 551 residues long: Inosine-5'-monophosphate dehydrogenase (551 aa).

2 CBS domains span residues 102 to 163 (FILD…PLSE) and 165 to 221 (MTSD…PLAS). NAD(+) is bound by residues 258–260 (DSS) and 308–310 (GMG). Residues Gly310 and Gly312 each coordinate K(+). Ser313 provides a ligand contact to IMP. Cys315 serves as a coordination point for K(+). Cys315 (thioimidate intermediate) is an active-site residue. Residues 349–351 (DGG), 372–373 (GS), and 396–400 (YRGMG) each bind IMP. The segment at 407-462 (AGTRRTASPPARGLRSPEASPSTAASSGGASRASALSEASPSAKSEASRTSTSTGS) is disordered. A compositionally biased stretch (low complexity) spans 422 to 462 (SPEASPSTAASSGGASRASALSEASPSAKSEASRTSTSTGS). Arg465 functions as the Proton acceptor in the catalytic mechanism. Residue Gln477 participates in IMP binding. Positions 536 and 537 each coordinate K(+).

The protein belongs to the IMPDH/GMPR family. In terms of assembly, homotetramer. Requires K(+) as cofactor.

The protein resides in the cytoplasm. It catalyses the reaction IMP + NAD(+) + H2O = XMP + NADH + H(+). The protein operates within purine metabolism; XMP biosynthesis via de novo pathway; XMP from IMP: step 1/1. With respect to regulation, mycophenolic acid (MPA) is a non-competitive inhibitor that prevents formation of the closed enzyme conformation by binding to the same site as the amobile flap. In contrast, mizoribine monophosphate (MZP) is a competitive inhibitor that induces the closed conformation. MPA is a potent inhibitor of mammalian IMPDHs but a poor inhibitor of the bacterial enzymes. MZP is a more potent inhibitor of bacterial IMPDH. Potently inhibited by MPA and adenine dinucleotide analogs such as thiazole-4-carboxamide adenine dinucleotide (TAD). Its function is as follows. Catalyzes the conversion of inosine 5'-phosphate (IMP) to xanthosine 5'-phosphate (XMP), the first committed and rate-limiting step in the de novo synthesis of guanine nucleotides, and therefore plays an important role in the regulation of cell growth. The sequence is that of Inosine-5'-monophosphate dehydrogenase from Toxoplasma gondii.